Consider the following 333-residue polypeptide: Adenosine deaminase (333 aa).

Zn(2+) is bound by residues H12 and H14. Substrate contacts are provided by H14, D16, and G170. H197 is a Zn(2+) binding site. The active-site Proton donor is the E200. D278 provides a ligand contact to Zn(2+). Position 279 (D279) interacts with substrate.

It belongs to the metallo-dependent hydrolases superfamily. Adenosine and AMP deaminases family. Adenosine deaminase subfamily. It depends on Zn(2+) as a cofactor.

It catalyses the reaction adenosine + H2O + H(+) = inosine + NH4(+). It carries out the reaction 2'-deoxyadenosine + H2O + H(+) = 2'-deoxyinosine + NH4(+). In terms of biological role, catalyzes the hydrolytic deamination of adenosine and 2-deoxyadenosine. The sequence is that of Adenosine deaminase from Escherichia coli O139:H28 (strain E24377A / ETEC).